The sequence spans 927 residues: Calmodulin-binding transcription activator CBT (927 aa).

Residues 26–152 constitute a DNA-binding region (CG-1); it reads YEKLVAEAAA…YRQTAEENAM (127 aa). The segment at 70-96 is necessary and sufficient for nuclear localization; the sequence is LYDRKVVRNFRKDGHNWKKKKDGRTVQ. Residues 72–79 carry the Nuclear localization signal motif; the sequence is DRKVVRNF. An ANK repeat occupies 609–638; sequence SGWTALHWAAYHGRERMVATLLSAGANPSL. 2 consecutive IQ domains span residues 757-786 and 799-828; these read EIVA…IQSH and MRRQ…SVGI. Positions 826–845 are calmodulin-binding; it reads VGIVEKAILRWRKKRKGLRG. The segment at 830 to 851 is necessary and sufficient for nuclear localization; it reads EKAILRWRKKRKGLRGIASGMP. One can recognise an IQ 3 domain in the interval 882–911; it reads FNRSVVRVQALFRSYKAQQEYRRMKIAHEE.

It belongs to the CAMTA family.

It is found in the nucleus. Its activity is regulated as follows. Transcriptional activation activity is strongly reduced by calmodulin. Functionally, transcription activator that binds calmodulin in a calcium-dependent manner in vitro. Binds to the DNA consensus sequence 5'-T[AC]CG[CT]GT[GT][GT][GT][GT]T[GT]CG-3'. This is Calmodulin-binding transcription activator CBT from Oryza sativa subsp. japonica (Rice).